The chain runs to 1708 residues: 187-kDa microtubule-associated protein AIR9 (1708 aa).

The segment covering 67 to 93 (SSLRVSGTTPVTIRRNSTGGVTENLAG) has biased composition (polar residues). Residues 67–255 (SSLRVSGTTP…KTSTPESRDS (189 aa)) form a disordered region. Residues 110–121 (DPVRRSLPELRK) show a composition bias toward basic and acidic residues. Low complexity predominate over residues 122–134 (SSVSSLSAKTVSK). Residues 149–165 (GSRSLTKSTGFSLSKPE) are compositionally biased toward polar residues. Positions 173–234 (SVSVSSKRAP…SIRSKSFSSP (62 aa)) are enriched in low complexity. LRR repeat units follow at residues 267 to 290 (AGDDMRLDLRGHRIRSLTSGGLHL), 291 to 315 (SPNLEFVYLRDNLLSTLEGIEILNR), 316 to 335 (VKVLDLSFNDFKGPGFEPLE), 337 to 359 (CKMLQQLYLAGNQITSLASLPQL), 360 to 382 (PNLEFLSVAQNKLKSLAMASQPR), 384 to 402 (QVLAASKNKITTLKDFPYL), and 403 to 425 (PVLEHLRVEENPLLKISHLEAAS). A9 repeat units follow at residues 489-584 (PSGY…FAIS), 601-682 (LNGE…QYKY), 698-777 (ITGD…VSTS), 793-878 (IVGD…VYVL), 895-977 (ITGD…RSCM), 994-1073 (VVGA…AISE), 1090-1167 (FLGS…RSIR), 1183-1272 (IPDC…VVVI), 1287-1365 (VRVK…KMSE), 1382-1473 (FTGK…AYAE), and 1489-1569 (IEGQ…VSAS).

As to quaternary structure, interacts with KCBP. Strongly expressed in dividing cells, like the meristemic region of the root tip.

The protein localises to the cytoplasm. Its subcellular location is the cell cortex. The protein resides in the cytoskeleton. It localises to the phragmoplast. Functionally, microtubule-associated protein that may be involved in the maturation of cell plates and proper insertion of cross-walls after cytokinesis. The chain is 187-kDa microtubule-associated protein AIR9 from Arabidopsis thaliana (Mouse-ear cress).